Reading from the N-terminus, the 199-residue chain is MKQSHFFAHLSRMKLINRWPLMRNVRTENVSEHSLQVAMVAHALAAIKNRKFGGQLNAERIALLAMYHDASEVLTGDLPTPVKYFNSQIAQEYKAIEKIAQQKLVDMAPDELRDIFAPLIDENAWSEEEQAIVKQADALCAYLKCLEELSAGNNEFGLAKTRLEKTLELRRSQEMDYFMAVFVPSFHLSLDEISQDSPL.

Residues 18–19 (RW) and H33 each bind substrate. One can recognise an HD domain in the interval 30-142 (VSEHSLQVAM…VKQADALCAY (113 aa)). A divalent metal cation contacts are provided by H33, H68, and D69. Substrate is bound by residues D69, 77–80 (DLPT), and D137. D137 contributes to the a divalent metal cation binding site.

It belongs to the 5DNU family. As to quaternary structure, homodimer. The cofactor is a divalent metal cation.

The protein resides in the cytoplasm. It carries out the reaction a 2'-deoxyribonucleoside 5'-phosphate + H2O = a 2'-deoxyribonucleoside + phosphate. In terms of biological role, catalyzes the strictly specific dephosphorylation of 2'-deoxyribonucleoside 5'-monophosphates. This Salmonella agona (strain SL483) protein is 5'-deoxynucleotidase YfbR.